Consider the following 58-residue polypeptide: MIFTVINRSLEVGDIRMNGVSSSSVFHIGDTESIYLSSIFDTPPESLIIGPFAPLAPE.

Required for the formation of functionally normal spores. Could be involved in the establishment of normal spore coat structure and/or permeability, which allows the access of germinants to their receptor. This is Probable spore germination protein GerPD (gerPD) from Bacillus subtilis (strain 168).